A 423-amino-acid polypeptide reads, in one-letter code: Gamma-glutamyl phosphate reductase (423 aa).

It belongs to the gamma-glutamyl phosphate reductase family.

The protein resides in the cytoplasm. The catalysed reaction is L-glutamate 5-semialdehyde + phosphate + NADP(+) = L-glutamyl 5-phosphate + NADPH + H(+). It participates in amino-acid biosynthesis; L-proline biosynthesis; L-glutamate 5-semialdehyde from L-glutamate: step 2/2. Functionally, catalyzes the NADPH-dependent reduction of L-glutamate 5-phosphate into L-glutamate 5-semialdehyde and phosphate. The product spontaneously undergoes cyclization to form 1-pyrroline-5-carboxylate. The chain is Gamma-glutamyl phosphate reductase from Desulfovibrio desulfuricans (strain ATCC 27774 / DSM 6949 / MB).